Consider the following 401-residue polypeptide: 1-deoxy-D-xylulose 5-phosphate reductoisomerase (401 aa).

NADPH-binding residues include T11, G12, S13, I14, R38, N39, and N125. K126 contacts 1-deoxy-D-xylulose 5-phosphate. E127 lines the NADPH pocket. Residue D151 participates in Mn(2+) binding. Positions 152, 153, 179, and 202 each coordinate 1-deoxy-D-xylulose 5-phosphate. E153 contacts Mn(2+). Residue G208 coordinates NADPH. 4 residues coordinate 1-deoxy-D-xylulose 5-phosphate: S215, N220, K221, and E224. E224 provides a ligand contact to Mn(2+).

Belongs to the DXR family. Mg(2+) serves as cofactor. The cofactor is Mn(2+).

It catalyses the reaction 2-C-methyl-D-erythritol 4-phosphate + NADP(+) = 1-deoxy-D-xylulose 5-phosphate + NADPH + H(+). The protein operates within isoprenoid biosynthesis; isopentenyl diphosphate biosynthesis via DXP pathway; isopentenyl diphosphate from 1-deoxy-D-xylulose 5-phosphate: step 1/6. Catalyzes the NADPH-dependent rearrangement and reduction of 1-deoxy-D-xylulose-5-phosphate (DXP) to 2-C-methyl-D-erythritol 4-phosphate (MEP). This chain is 1-deoxy-D-xylulose 5-phosphate reductoisomerase, found in Paraburkholderia phymatum (strain DSM 17167 / CIP 108236 / LMG 21445 / STM815) (Burkholderia phymatum).